Reading from the N-terminus, the 423-residue chain is MSKASTFSAPKGVPDYVPPQSSEFVAVRDGLTRAARLAGYGHIELPIFEDTGLFARGVGESTDVVSKEMYTFADRGDRSVTLRPEGTAGVMRAVIEHGLDRGQLPVKLSYAGPFFRYERPQAGRYRQLQQVGVEAIGVDDPALDAEVIAIADAGFRGLGLDGFRLEITSLGDDTCRPQYRERLQEFLFALPLDEETRRRAEINPLRVLDDKRKEVREMTADAPLMLDHLSDTAKAHFDEVLAHLDALSVPYVVNPRMVRGLDYYTKTTFEFVHDGLGAQSGIGGGGRYDGLMAQLGGQPLSGIGFGLGVDRTVLALAAEGKTAGSTARCEVFGVPLGEEAKAKLVVIAQQLRAQGIRVDLAYGNRGVKGAMKAADRSGAALALVLGDRDIADGTVGIKNLATGDQESVSSADVVARVGAILGA.

This sequence belongs to the class-II aminoacyl-tRNA synthetase family. Homodimer.

The protein resides in the cytoplasm. The catalysed reaction is tRNA(His) + L-histidine + ATP = L-histidyl-tRNA(His) + AMP + diphosphate + H(+). This is Histidine--tRNA ligase from Rhodococcus jostii (strain RHA1).